We begin with the raw amino-acid sequence, 232 residues long: Clarin-1 (232 aa).

A helical membrane pass occupies residues 8-28 (IIFCMAGVFSFACALGVVTAL). N48 carries an N-linked (GlcNAc...) asparagine glycan. 2 helical membrane-spanning segments follow: residues 101–121 (IILFSMILVVLTMVGTAFFMY) and 135–155 (LGLYLVSFISGSCGCLVMILF). The N-linked (GlcNAc...) asparagine glycan is linked to N184. The chain crosses the membrane as a helical span at residues 186–206 (TTSFWVVFICFFVHFLNGLLI).

Belongs to the clarin family.

The protein localises to the cell membrane. Functionally, may have a role in the excitatory ribbon synapse junctions between hair cells and cochlear ganglion cells and presumably also in analogous synapses within the retina. The sequence is that of Clarin-1 (Clrn1) from Rattus norvegicus (Rat).